Here is a 198-residue protein sequence, read N- to C-terminus: Suppressor of cytokine signaling 2 (198 aa).

Residues 1-29 (MTLRCLEPSGNGGEGTRSQWGTAGSAEEP) form a disordered region. Positions 1–75 (MTLRCLEPSG…PEGTFLIRDS (75 aa)) are interaction with AREL1. Phosphoserine is present on S30. The SH2 domain occupies 48 to 156 (WYWGSMTVNE…TVHLYLTKPL (109 aa)). The residue at position 52 (S52) is a Phosphoserine; by PKC. Residues 151–197 (YLTKPLYTSAPSLQHLCRLTINKCTGAIWGLPLPTRLKDYLEEYKFQ) enclose the SOCS box domain. K173 participates in a covalent cross-link: Glycyl lysine isopeptide (Lys-Gly) (interchain with G-Cter in ubiquitin).

As to quaternary structure, substrate-recognition component of the ECS(SOCS2) complex, composed of SOCS2, CUL5, ELOB, ELOC and RNF7/RBX2. Interacts with IGF1R. Interacts with DCUN1D1. Ubiquitinated; mediated by AREL1 and leading to its subsequent proteasomal degradation. Ubiquitination is dependent on its phosphorylation at Ser-52, by PKC. Ubiquitination is stimulated by LPS. In terms of processing, phosphorylation at Ser-52 by PKC facilitates its ubiquitination and proteasomal degradation. As to expression, high expression in heart, placenta, lung, kidney and prostate. Predominantly expressed in pulmonary epithelia cells, specifically type II pneumocytes.

Its subcellular location is the cytoplasm. The protein operates within protein modification; protein ubiquitination. Its activity is regulated as follows. Substrate-binding is prevented by the covalent inhibitor MN551 that cross-links with Cys-111. Also inhibited by a MN551 derivative, MN714, which contains a pivaloyloxymethyl that allows cell permeability. In terms of biological role, substrate-recognition component of a cullin-5-RING E3 ubiquitin-protein ligase complex (ECS complex, also named CRL5 complex), which mediates the ubiquitination and subsequent proteasomal degradation of target proteins, such as EPOR and GHR. Specifically recognizes and binds phosphorylated proteins via its SH2 domain, promoting their ubiquitination. The ECS(SOCS2) complex acts as a key regulator of growth hormone receptor (GHR) levels by mediating ubiquitination and degradation of GHR, following GHR phosphorylation by JAK2. The ECS(SOCS2) also catalyzes ubiquitination and degradation of JAK2-phosphorylated EPOR. The sequence is that of Suppressor of cytokine signaling 2 from Homo sapiens (Human).